The chain runs to 289 residues: MDIRFKQVDFTYQPNTPFEQRALFDINLTIQDGSYTAIVGHTGSGKSTLLQHLNALVKPTKGQVTIGERVITPETDNKNLKPIRKKVGIVFQFPEAQLFEETVERDIAFGPKNFGVSDEEAKKLAKKMLDLVGLDEKYLQHSPFELSGGQMRRVAIAGVLAMEPEVLVLDEPTAGLDPKGRKEMMEMFSRLHKEHNMTIVLVTHLMDDVANYADHVIVLEKGQIVRAGAPQEVFQETQWLKEKQLGVPTAAEFAEKLVAKGFSFEQLPLTADQLADQLLKKMQEAGEAK.

Positions Ile-3–Gly-246 constitute an ABC transporter domain. Gly-40 to Ser-47 provides a ligand contact to ATP.

It belongs to the ABC transporter superfamily. Energy-coupling factor EcfA family. In terms of assembly, forms a stable energy-coupling factor (ECF) transporter complex composed of 2 membrane-embedded substrate-binding proteins (S component), 2 ATP-binding proteins (A component) and 2 transmembrane proteins (T component).

It localises to the cell membrane. Its function is as follows. ATP-binding (A) component of a common energy-coupling factor (ECF) ABC-transporter complex. Unlike classic ABC transporters this ECF transporter provides the energy necessary to transport a number of different substrates. This chain is Energy-coupling factor transporter ATP-binding protein EcfA2, found in Enterococcus faecalis (strain ATCC 700802 / V583).